A 228-amino-acid chain; its full sequence is Cytidylate kinase (228 aa).

An ATP-binding site is contributed by 17–25 (GPTASGKGT).

This sequence belongs to the cytidylate kinase family. Type 1 subfamily.

It is found in the cytoplasm. The catalysed reaction is CMP + ATP = CDP + ADP. It catalyses the reaction dCMP + ATP = dCDP + ADP. In Burkholderia cenocepacia (strain HI2424), this protein is Cytidylate kinase.